We begin with the raw amino-acid sequence, 411 residues long: Putative ion-transport protein YfeO (411 aa).

11 helical membrane-spanning segments follow: residues 9–29 (MLLLSLPALIIGVASSLVLIA), 54–74 (DSPFWIVGMLTLTGVVVGLII), 99–119 (ALPGLLLALIIGLAGGVSLGP), 149–169 (ILASAGTIGALFGTPVAAALI), 186–206 (LFAPLMAAAAGSLTTSLFFHP), 223–243 (IASGAIVAAIAIAAGMVAVWC), 258–278 (VLILGIGGFILGILGVIGGPL), 296–316 (LGAGDYFTLAVVKLAALVIAA), 322–342 (GGRIFPAVFIGAALGLMLHAH), 343–363 (VEAVPAAITVSCAILGLVLVV), and 386–406 (LLCIVMLPAWLLLAGKPLLAA).

This sequence belongs to the chloride channel (TC 2.A.49) family.

It localises to the cell membrane. This Salmonella choleraesuis (strain SC-B67) protein is Putative ion-transport protein YfeO.